We begin with the raw amino-acid sequence, 610 residues long: UvrABC system protein C (610 aa).

The GIY-YIG domain maps to 16–94; sequence HQPGVYRMYN…IKQYLPKYNV (79 aa). The region spanning 204 to 239 is the UVR domain; sequence NQVLELLVQKMEIASQQLKFEDAAKFRDQIQAIRRV.

Belongs to the UvrC family. As to quaternary structure, interacts with UvrB in an incision complex.

Its subcellular location is the cytoplasm. Functionally, the UvrABC repair system catalyzes the recognition and processing of DNA lesions. UvrC both incises the 5' and 3' sides of the lesion. The N-terminal half is responsible for the 3' incision and the C-terminal half is responsible for the 5' incision. The protein is UvrABC system protein C of Vibrio vulnificus (strain CMCP6).